The chain runs to 128 residues: Large ribosomal subunit protein bL19 (128 aa).

This sequence belongs to the bacterial ribosomal protein bL19 family.

This protein is located at the 30S-50S ribosomal subunit interface and may play a role in the structure and function of the aminoacyl-tRNA binding site. This is Large ribosomal subunit protein bL19 from Bradyrhizobium sp. (strain ORS 278).